A 333-amino-acid chain; its full sequence is Fructose-1,6-bisphosphatase class 1 (333 aa).

4 residues coordinate Mg(2+): glutamate 92, aspartate 113, leucine 115, and aspartate 116. Residues 116–119 (DGSS), asparagine 209, tyrosine 242, and lysine 272 each bind substrate. Glutamate 278 lines the Mg(2+) pocket.

This sequence belongs to the FBPase class 1 family. As to quaternary structure, homotetramer. It depends on Mg(2+) as a cofactor.

The protein resides in the cytoplasm. The enzyme catalyses beta-D-fructose 1,6-bisphosphate + H2O = beta-D-fructose 6-phosphate + phosphate. It participates in carbohydrate biosynthesis; Calvin cycle. The polypeptide is Fructose-1,6-bisphosphatase class 1 (Chlorobium phaeobacteroides (strain BS1)).